The primary structure comprises 322 residues: Ras-like protein 2 (322 aa).

Residues 20-25, 36-42, 66-67, and 123-126 each bind GTP; these read GVGKSA, VDEYDPT, AG, and NKSD. Positions 39-47 match the Effector region motif; that stretch reads YDPTIEDSY. Lysine 131 is covalently cross-linked (Glycyl lysine isopeptide (Lys-Gly) (interchain with G-Cter in ubiquitin)). 153 to 155 lines the GTP pocket; the sequence is SAK. A disordered region spans residues 178–322; the sequence is YNKTLTENDN…SGSGGCCIIS (145 aa). A compositionally biased stretch (polar residues) spans 180–205; that stretch reads KTLTENDNSKQTSQDTKGSGANSVPR. Serine 198, serine 202, serine 207, serine 214, serine 235, and serine 238 each carry phosphoserine. Residues 215–252 are compositionally biased toward polar residues; that stretch reads NAANGKNVNSSTTVVNARNASIESKTGLAGNQATNGKT. A compositionally biased stretch (low complexity) spans 261-284; that stretch reads NSTGQAGQANAQSANTVNNRVNNN. A compositionally biased stretch (polar residues) spans 285 to 294; the sequence is SKAGQVSNAK. Cysteine 318 carries the S-palmitoyl cysteine lipid modification. Position 319 is a cysteine methyl ester (cysteine 319). Cysteine 319 is lipidated: S-farnesyl cysteine. Positions 320–322 are cleaved as a propeptide — removed in mature form; sequence IIS.

This sequence belongs to the small GTPase superfamily. Ras family. In terms of processing, farnesylated by RAM1-RAM2, which is required for targeting RAS2 to the cytoplasmic site of the endoplasmic reticulum, where proteolytic processing of the C-terminus by RCE1 and methylation of the resulting carboxyl group by STE14 occurs. Palmitoylated by the ERF2-SHR5 complex, which is required for proper plasma membrane localization of RAS2.

The protein localises to the cell membrane. The enzyme catalyses GTP + H2O = GDP + phosphate + H(+). With respect to regulation, alternates between an inactive form bound to GDP and an active form bound to GTP. Activated by guanine nucleotide-exchange factor (GEF) CDC25 and inactivated by GTPase-activating proteins (GAPs) IRA1 and IRA2. Its function is as follows. The S.cerevisiae Ras proteins modulate the activity of the adenylate cyclase catalytic subunit and therefore affect the biosynthesis of cyclic-AMP. The polypeptide is Ras-like protein 2 (RAS2) (Saccharomyces cerevisiae (strain ATCC 204508 / S288c) (Baker's yeast)).